The primary structure comprises 167 residues: Phospholipase A2 (167 aa).

Ca(2+) is bound by residues tryptophan 38, glycine 40, and glycine 42. 5 disulfides stabilise this stretch: cysteine 39–cysteine 61, cysteine 60–cysteine 99, cysteine 67–cysteine 92, cysteine 90–cysteine 127, and cysteine 132–cysteine 144. Residue asparagine 47 is glycosylated (N-linked (GlcNAc...) asparagine). Residue histidine 64 is part of the active site. Aspartate 65 is a binding site for Ca(2+). Positions 136–140 (ARSAR) are excised as a propeptide.

Belongs to the phospholipase A2 family. Group III subfamily. Heterodimer composed of a large subunit and a small subunit; disulfide-linked. The cofactor is Ca(2+). As to expression, expressed by the venom gland.

The protein resides in the secreted. The catalysed reaction is a 1,2-diacyl-sn-glycero-3-phosphocholine + H2O = a 1-acyl-sn-glycero-3-phosphocholine + a fatty acid + H(+). Its function is as follows. Phospholipase toxin, which catalyzes the calcium-dependent hydrolysis of the 2-acyl groups in 3-sn-phosphoglycerides. Inhibits both skeletal (RYR1) and cardiac (RYR2) ryanodine receptors (calcium release channels). Probably blocks ryanodine receptors by generating a lipid product. Shows hemolytic activity, but it is not know if it is direct or indirect. This chain is Phospholipase A2, found in Hottentotta tamulus (Eastern Indian scorpion).